A 248-amino-acid polypeptide reads, in one-letter code: Orotidine 5'-phosphate decarboxylase (248 aa).

Substrate is bound by residues Asp22, Lys44, 71–80 (DLKFHDIPNT), Thr131, Arg192, Gln201, Gly221, and Arg222. Lys73 serves as the catalytic Proton donor.

It belongs to the OMP decarboxylase family. Type 1 subfamily. As to quaternary structure, homodimer.

The catalysed reaction is orotidine 5'-phosphate + H(+) = UMP + CO2. It participates in pyrimidine metabolism; UMP biosynthesis via de novo pathway; UMP from orotate: step 2/2. In terms of biological role, catalyzes the decarboxylation of orotidine 5'-monophosphate (OMP) to uridine 5'-monophosphate (UMP). This chain is Orotidine 5'-phosphate decarboxylase, found in Photorhabdus laumondii subsp. laumondii (strain DSM 15139 / CIP 105565 / TT01) (Photorhabdus luminescens subsp. laumondii).